The sequence spans 352 residues: Histidinol-phosphate aminotransferase 1 (352 aa).

Residue Lys-211 is modified to N6-(pyridoxal phosphate)lysine.

This sequence belongs to the class-II pyridoxal-phosphate-dependent aminotransferase family. Histidinol-phosphate aminotransferase subfamily. As to quaternary structure, homodimer. Pyridoxal 5'-phosphate is required as a cofactor.

It carries out the reaction L-histidinol phosphate + 2-oxoglutarate = 3-(imidazol-4-yl)-2-oxopropyl phosphate + L-glutamate. The protein operates within amino-acid biosynthesis; L-histidine biosynthesis; L-histidine from 5-phospho-alpha-D-ribose 1-diphosphate: step 7/9. The chain is Histidinol-phosphate aminotransferase 1 from Haemophilus influenzae (strain 86-028NP).